Here is a 478-residue protein sequence, read N- to C-terminus: Cytochrome c-552 (478 aa).

Positions 1 to 26 are cleaved as a signal peptide; sequence MARKTLRARRFFSLIFPFFFMTSVYA. Histidine 94 contacts heme c. The heme site is built by cysteine 122, cysteine 125, and lysine 126. Cysteine 160, cysteine 163, histidine 164, cysteine 209, cysteine 212, and histidine 213 together coordinate heme c. The Ca(2+) site is built by glutamate 215, tyrosine 216, lysine 261, and glutamine 263. Tyrosine 216 contributes to the substrate binding site. Histidine 264 serves as a coordination point for substrate. The heme c site is built by histidine 275, cysteine 282, cysteine 285, histidine 286, histidine 301, cysteine 314, cysteine 317, histidine 318, and histidine 393.

Belongs to the cytochrome c-552 family. The cofactor is Ca(2+). Heme c is required as a cofactor.

Its subcellular location is the periplasm. It carries out the reaction 6 Fe(III)-[cytochrome c] + NH4(+) + 2 H2O = 6 Fe(II)-[cytochrome c] + nitrite + 8 H(+). It participates in nitrogen metabolism; nitrate reduction (assimilation). Its function is as follows. Catalyzes the reduction of nitrite to ammonia, consuming six electrons in the process. The chain is Cytochrome c-552 from Salmonella arizonae (strain ATCC BAA-731 / CDC346-86 / RSK2980).